Reading from the N-terminus, the 696-residue chain is L-amino-acid oxidase (696 aa).

Positions 1 to 130 (MKWSAAAGAA…IKMRRDLKAR (130 aa)) are excised as a propeptide. Residues Glu207, Arg215, 236 to 237 (MR), and Val440 each bind FAD. Arg237 contributes to the substrate binding site. Tyr564 is a binding site for substrate. FAD contacts are provided by residues Glu649 and 658–661 (IASA).

It belongs to the flavin monoamine oxidase family. FAD serves as cofactor.

The catalysed reaction is an L-alpha-amino acid + O2 + H2O = a 2-oxocarboxylate + H2O2 + NH4(+). The sequence is that of L-amino-acid oxidase (lox) from Neurospora crassa (strain ATCC 24698 / 74-OR23-1A / CBS 708.71 / DSM 1257 / FGSC 987).